The chain runs to 645 residues: 1,4-alpha-glucan branching enzyme GlgB (645 aa).

The active-site Nucleophile is Asp-309. Glu-352 acts as the Proton donor in catalysis. Residues Val-619–Arg-645 are disordered. Residues Arg-636 to Arg-645 show a composition bias toward polar residues.

The protein belongs to the glycosyl hydrolase 13 family. GlgB subfamily. As to quaternary structure, monomer.

The catalysed reaction is Transfers a segment of a (1-&gt;4)-alpha-D-glucan chain to a primary hydroxy group in a similar glucan chain.. It participates in glycan biosynthesis; glycogen biosynthesis. Functionally, catalyzes the formation of the alpha-1,6-glucosidic linkages in glycogen by scission of a 1,4-alpha-linked oligosaccharide from growing alpha-1,4-glucan chains and the subsequent attachment of the oligosaccharide to the alpha-1,6 position. This is 1,4-alpha-glucan branching enzyme GlgB from Bacillus cereus (strain Q1).